The chain runs to 68 residues: DNA gyrase inhibitor YacG (68 aa).

Zn(2+) contacts are provided by cysteine 10, cysteine 13, cysteine 29, and cysteine 33. A disordered region spans residues 45–68 (EKRIPSDTELSDSDEWSEEDPLKH). A compositionally biased stretch (acidic residues) spans 53–68 (ELSDSDEWSEEDPLKH).

It belongs to the DNA gyrase inhibitor YacG family. Interacts with GyrB. It depends on Zn(2+) as a cofactor.

Functionally, inhibits all the catalytic activities of DNA gyrase by preventing its interaction with DNA. Acts by binding directly to the C-terminal domain of GyrB, which probably disrupts DNA binding by the gyrase. The protein is DNA gyrase inhibitor YacG of Yersinia pseudotuberculosis serotype O:1b (strain IP 31758).